A 226-amino-acid polypeptide reads, in one-letter code: PKHD-type hydroxylase PST_0995 (226 aa).

Residues 78-178 (KVFPPLFNCY…RLASFFWIQS (101 aa)) form the Fe2OG dioxygenase domain. His-96, Asp-98, and His-159 together coordinate Fe cation. Residue Arg-169 coordinates 2-oxoglutarate.

It depends on Fe(2+) as a cofactor. Requires L-ascorbate as cofactor.

The sequence is that of PKHD-type hydroxylase PST_0995 from Stutzerimonas stutzeri (strain A1501) (Pseudomonas stutzeri).